The sequence spans 235 residues: MGQKVHPHGIRLGIVKPWSSTWFANTQDFADNLDGDFKVRKFLNKELMNASVSRITIERPAKSIRVTIHTARPGIVIGKKGEDVEKLRTAVAKIAGVPAQINIAEVKKPELDAKLVADSIASQLERRVMFRRAMKRAVQNAMRLGAKGIKVEVSGRLGGAEIARSEWYREGRVPLHTLRADIDYNTAEAHTTYGVIGVKVWIFKGEILGGMAAIAQQPEQQPAAPKKAPRGKGRK.

A KH type-2 domain is found at 39 to 107 (VRKFLNKELM…PAQINIAEVK (69 aa)).

Belongs to the universal ribosomal protein uS3 family. Part of the 30S ribosomal subunit. Forms a tight complex with proteins S10 and S14.

Functionally, binds the lower part of the 30S subunit head. Binds mRNA in the 70S ribosome, positioning it for translation. This Actinobacillus succinogenes (strain ATCC 55618 / DSM 22257 / CCUG 43843 / 130Z) protein is Small ribosomal subunit protein uS3.